We begin with the raw amino-acid sequence, 78 residues long: Delta-conotoxin-like Ai6.1 (78 aa).

An N-terminal signal peptide occupies residues 1 to 22 (MKLTCVMIVAVLFLTAWTFATA). The propeptide occupies 23 to 49 (DDPRNGLGNLFSNAHHEMKNPEASKLN). 3 disulfide bridges follow: cysteine 53–cysteine 68, cysteine 60–cysteine 72, and cysteine 67–cysteine 77.

The protein belongs to the conotoxin O1 superfamily. In terms of tissue distribution, expressed by the venom duct.

It localises to the secreted. Functionally, delta-conotoxins bind to site 6 of voltage-gated sodium channels (Nav) and inhibit the inactivation process. In Conus ammiralis (Admiral cone), this protein is Delta-conotoxin-like Ai6.1.